Reading from the N-terminus, the 184-residue chain is UPF0302 protein OB1778 (184 aa).

The protein belongs to the UPF0302 family.

This chain is UPF0302 protein OB1778, found in Oceanobacillus iheyensis (strain DSM 14371 / CIP 107618 / JCM 11309 / KCTC 3954 / HTE831).